The primary structure comprises 279 residues: Acetylglutamate kinase (279 aa).

Substrate contacts are provided by residues glycine 64–glycine 65, arginine 86, and asparagine 177.

The protein belongs to the acetylglutamate kinase family. ArgB subfamily.

The protein localises to the cytoplasm. It carries out the reaction N-acetyl-L-glutamate + ATP = N-acetyl-L-glutamyl 5-phosphate + ADP. The protein operates within amino-acid biosynthesis; L-arginine biosynthesis; N(2)-acetyl-L-ornithine from L-glutamate: step 2/4. Catalyzes the ATP-dependent phosphorylation of N-acetyl-L-glutamate. This chain is Acetylglutamate kinase, found in Campylobacter jejuni subsp. jejuni serotype O:23/36 (strain 81-176).